The following is a 288-amino-acid chain: Undecaprenyl-diphosphatase (288 aa).

8 helical membrane-spanning segments follow: residues 25–45 (GITE…NEFL), 53–73 (FIDM…MVIY), 93–113 (WKLW…GLLL), 121–141 (LSNF…FIWI), 171–191 (VLSI…GIIV), 196–216 (SVAA…YSGL), 231–251 (GQAA…LFVI), and 263–283 (FTVF…YGAV).

Belongs to the UppP family.

The protein localises to the cell membrane. It catalyses the reaction di-trans,octa-cis-undecaprenyl diphosphate + H2O = di-trans,octa-cis-undecaprenyl phosphate + phosphate + H(+). Catalyzes the dephosphorylation of undecaprenyl diphosphate (UPP). Confers resistance to bacitracin. The polypeptide is Undecaprenyl-diphosphatase (Streptococcus thermophilus (strain ATCC BAA-250 / LMG 18311)).